The primary structure comprises 274 residues: MQAILSSWFVQGMIKATSDMWLKGWDERNGGNVSLRLTAEDVTPYESDFYPQPRHEALSQPMPALADCWFIVTGSGKFFRNVQLDPADSLVVLQVDSDGKGYRIFWGLTNGGLPTSELASHFQSHIVRMGVTHGHDRVIMHCHATNLIALSYVLELDTAKFTRELWEGSTECLVVFPDGVGIVPWMVPGTDAIGDATSEQMQRHSLVLWPFHGIFGTGPTLDDAFGLIDTAEKSAEVMVKVRSMGGKKQTISTEELIALGKRFGVTPMEVALRV.

Glu-117 is an active-site residue. His-141, His-143, and His-212 together coordinate Zn(2+).

Belongs to the aldolase class II family. RhaD subfamily. Homotetramer. It depends on Zn(2+) as a cofactor.

The protein resides in the cytoplasm. The catalysed reaction is L-rhamnulose 1-phosphate = (S)-lactaldehyde + dihydroxyacetone phosphate. It participates in carbohydrate degradation; L-rhamnose degradation; glycerone phosphate from L-rhamnose: step 3/3. Catalyzes the reversible cleavage of L-rhamnulose-1-phosphate to dihydroxyacetone phosphate (DHAP) and L-lactaldehyde. In Pectobacterium carotovorum subsp. carotovorum (strain PC1), this protein is Rhamnulose-1-phosphate aldolase.